Reading from the N-terminus, the 231-residue chain is 2-C-methyl-D-erythritol 4-phosphate cytidylyltransferase (231 aa).

This sequence belongs to the IspD/TarI cytidylyltransferase family. IspD subfamily.

It carries out the reaction 2-C-methyl-D-erythritol 4-phosphate + CTP + H(+) = 4-CDP-2-C-methyl-D-erythritol + diphosphate. It functions in the pathway isoprenoid biosynthesis; isopentenyl diphosphate biosynthesis via DXP pathway; isopentenyl diphosphate from 1-deoxy-D-xylulose 5-phosphate: step 2/6. In terms of biological role, catalyzes the formation of 4-diphosphocytidyl-2-C-methyl-D-erythritol from CTP and 2-C-methyl-D-erythritol 4-phosphate (MEP). This chain is 2-C-methyl-D-erythritol 4-phosphate cytidylyltransferase, found in Clostridium kluyveri (strain NBRC 12016).